The primary structure comprises 1091 residues: ATP-citrate synthase (1091 aa).

An ATP-grasp domain is found at 4-265 (KAISEQTGKE…LDAKSGASLK (262 aa)). Residues K58, R66, G67, P109, V111, and E118 each coordinate ATP. Y131 carries the post-translational modification Phosphotyrosine. An ATP-binding site is contributed by D216. 3 residues coordinate Mg(2+): D257, S260, and A262. S263 carries the phosphoserine modification. 5 residues coordinate citrate: G309, N346, T348, Y364, and R379. Over residues 442 to 457 (SGSTSTPAPSRTASFS) the composition is skewed to low complexity. Residues 442 to 478 (SGSTSTPAPSRTASFSESRADEVAPAKKAKPAMPQGK) are disordered. Residue T447 is modified to Phosphothreonine. Phosphoserine is present on S451. S455 carries the post-translational modification Phosphoserine; by PKA and PKB/AKT1 or PKB/AKT2 or BCKDK. Phosphoserine is present on S459. K530, K536, and K544 each carry N6-acetyllysine; alternate. Glycyl lysine isopeptide (Lys-Gly) (interchain with G-Cter in ubiquitin); alternate cross-links involve residues K530, K536, and K544. Residue T629 is modified to Phosphothreonine. S653 is modified (phosphoserine). Y672 carries the post-translational modification Phosphotyrosine. H750 (tele-phosphohistidine intermediate) is an active-site residue. A CoA-binding site is contributed by 769-779 (LKEAGVFVPRS). At S829 the chain carries Phosphoserine. An N6-acetyllysine mark is found at K938, K958, K968, and K1067. Position 1090 is a phosphoserine (S1090).

This sequence in the N-terminal section; belongs to the succinate/malate CoA ligase beta subunit family. It in the C-terminal section; belongs to the succinate/malate CoA ligase alpha subunit family. Homotetramer. The cofactor is Mg(2+). Phosphorylated by PKA and GSK3 in a sequential manner; phosphorylation results in activation of its activity. Phosphorylation on Thr-447 and Ser-451 depends on the phosphorylation state of Ser-455. Phosphorylation on Ser-455 is decreased by prior phosphorylation on the other 2 residues. Phosphorylated at Ser-455 by BCKDK and dephosphorylated by protein phosphatase PPM1K. In terms of processing, ISGylated. Post-translationally, acetylated at Lys-530, Lys-536 and Lys-544 by KAT2B/PCAF. Acetylation is promoted by glucose and stabilizes the protein, probably by preventing ubiquitination at the same sites. Acetylation promotes de novo lipid synthesis. Deacetylated by SIRT2. Ubiquitinated at Lys-530, Lys-536 and Lys-544 by the BCR(KLHL25) E3 ubiquitin ligase complex and UBR4, leading to its degradation. Ubiquitination is probably inhibited by acetylation at same site. BCR(KLHL25)-mediated degradation of ACLY promotes fatty acid oxidation and is required for differentiation of inducible regulatory T (iTreg) cells.

It is found in the cytoplasm. The protein localises to the cytosol. It catalyses the reaction oxaloacetate + acetyl-CoA + ADP + phosphate = citrate + ATP + CoA. Its activity is regulated as follows. Phosphorylation results in activation of its activity. Glucose 6-phosphate, fructose 6-phosphate, fructose 2,6-bisphosphate, ribulose 5-phosphate, and fructose 1,6-bisphosphate also act as activators. In terms of biological role, catalyzes the cleavage of citrate into oxaloacetate and acetyl-CoA, the latter serving as common substrate in multiple biochemical reactions in protein, carbohydrate and lipid metabolism. The sequence is that of ATP-citrate synthase (Acly) from Mus musculus (Mouse).